The primary structure comprises 141 residues: Hemoglobin subunit alpha-D (141 aa).

Residues 1-141 enclose the Globin domain; the sequence is MLGAEETALV…VAAVLAEKYR (141 aa). 2 residues coordinate heme b: histidine 58 and histidine 87.

This sequence belongs to the globin family. As to quaternary structure, heterotetramer of two alpha-D chains and two beta chains. Red blood cells.

Involved in oxygen transport from the lung to the various peripheral tissues. The protein is Hemoglobin subunit alpha-D (HBAD) of Phalacrocorax carbo (Great cormorant).